Consider the following 361-residue polypeptide: Nicotinate-nucleotide--dimethylbenzimidazole phosphoribosyltransferase (361 aa).

Residue E315 is the Proton acceptor of the active site.

It belongs to the CobT family.

It catalyses the reaction 5,6-dimethylbenzimidazole + nicotinate beta-D-ribonucleotide = alpha-ribazole 5'-phosphate + nicotinate + H(+). The protein operates within nucleoside biosynthesis; alpha-ribazole biosynthesis; alpha-ribazole from 5,6-dimethylbenzimidazole: step 1/2. In terms of biological role, catalyzes the synthesis of alpha-ribazole-5'-phosphate from nicotinate mononucleotide (NAMN) and 5,6-dimethylbenzimidazole (DMB). In Clostridium perfringens (strain 13 / Type A), this protein is Nicotinate-nucleotide--dimethylbenzimidazole phosphoribosyltransferase.